A 120-amino-acid chain; its full sequence is Large ribosomal subunit protein eL8 (120 aa).

Belongs to the eukaryotic ribosomal protein eL8 family. Part of the 50S ribosomal subunit. Probably part of the RNase P complex.

Its subcellular location is the cytoplasm. Its function is as follows. Multifunctional RNA-binding protein that recognizes the K-turn motif in ribosomal RNA, the RNA component of RNase P, box H/ACA, box C/D and box C'/D' sRNAs. The polypeptide is Large ribosomal subunit protein eL8 (Halorubrum lacusprofundi (strain ATCC 49239 / DSM 5036 / JCM 8891 / ACAM 34)).